We begin with the raw amino-acid sequence, 134 residues long: Cytochrome b5 (134 aa).

The region spanning 6 to 82 (VKYFTRAEVA…MKQYKVGELV (77 aa)) is the Cytochrome b5 heme-binding domain. 2 residues coordinate heme: H41 and H65. The helical transmembrane segment at 111 to 131 (WLMPFVLGLVATLIYKFFFGT) threads the bilayer.

Belongs to the cytochrome b5 family.

It is found in the endoplasmic reticulum membrane. It localises to the microsome membrane. Functionally, cytochrome b5 is a membrane bound hemoprotein which function as an electron carrier for several membrane bound oxygenases. The sequence is that of Cytochrome b5 (Cyt-b5) from Musca domestica (House fly).